Here is a 322-residue protein sequence, read N- to C-terminus: Cyclin mcs2 (322 aa).

Residue serine 310 is modified to Phosphoserine.

It belongs to the cyclin family. Cyclin C subfamily. In terms of assembly, one of the nine subunits forming the core-TFIIH basal transcription factor. Interacts with crk1 and skp1.

The protein localises to the nucleus. Its function is as follows. Essential for progression through the cell cycle. Possesses kinase activity that can be detected when myelin basic protein (MBP) is provided as an exogenous substrate. This is Cyclin mcs2 (mcs2) from Schizosaccharomyces pombe (strain 972 / ATCC 24843) (Fission yeast).